The primary structure comprises 356 residues: UDP-3-O-acylglucosamine N-acyltransferase (356 aa).

Histidine 242 serves as the catalytic Proton acceptor.

Belongs to the transferase hexapeptide repeat family. LpxD subfamily. Homotrimer.

It catalyses the reaction a UDP-3-O-[(3R)-3-hydroxyacyl]-alpha-D-glucosamine + a (3R)-hydroxyacyl-[ACP] = a UDP-2-N,3-O-bis[(3R)-3-hydroxyacyl]-alpha-D-glucosamine + holo-[ACP] + H(+). The protein operates within bacterial outer membrane biogenesis; LPS lipid A biosynthesis. Catalyzes the N-acylation of UDP-3-O-acylglucosamine using 3-hydroxyacyl-ACP as the acyl donor. Is involved in the biosynthesis of lipid A, a phosphorylated glycolipid that anchors the lipopolysaccharide to the outer membrane of the cell. The polypeptide is UDP-3-O-acylglucosamine N-acyltransferase (Acinetobacter baumannii (strain AB0057)).